The chain runs to 1230 residues: Serine/threonine-protein kinase CST20 (1230 aa).

Residues 1–20 are compositionally biased toward polar residues; it reads MSILSENNPTPTSITDPNKS. Disordered stretches follow at residues 1–384 and 413–470; these read MSIL…TAHN and SSLE…HSQE. Composition is skewed to low complexity over residues 57–70 and 96–125; these read NTTSANTSSLSLGS and SGSGDIDDSQQSHNNNNNNNNNNNESNPES. Basic and acidic residues predominate over residues 150–161; the sequence is HQGDDSDNEKQY. Composition is skewed to polar residues over residues 175–197, 207–224, and 237–246; these read DSYSPGTLESPGTLNALETNNVS, TSSLEDLSLSLQHQNENA, and PTSKTSSFHD. Positions 248-257 are enriched in low complexity; it reads SSVISSSTSV. 2 stretches are compositionally biased toward polar residues: residues 262–277 and 311–330; these read SNPTSTRGSHLSSYKS and DTLSSATNSPNLLRNDTLQG. 2 stretches are compositionally biased toward low complexity: residues 349–381 and 439–468; these read NTSATSRNTSGTSTSTVVKNSRSGTSKSTSTST and KVRGVFSSMFGKNKSTSSSSSSNSGSNSHS. The CRIB domain occupies 475–488; the sequence is ISTPFNAKHLAHVG. Disordered regions lie at residues 545 to 831 and 867 to 919; these read FHFD…ALAD and LREK…KQAA. Positions 550 to 561 are enriched in polar residues; the sequence is NKSSSSGWSNEN. Gly residues predominate over residues 570–581; it reads SNSGSGSGGGGA. Over residues 604 to 613 the composition is skewed to polar residues; it reads ITPSQSMPTK. Residues 614 to 628 show a composition bias toward basic and acidic residues; it reads TESKQSENQHPHEDN. Residues 629–642 are compositionally biased toward polar residues; sequence ATQYTPRTPTSHVQ. Composition is skewed to low complexity over residues 670–683, 696–710, and 736–749; these read PSSQSLPRSDSQSD, SPSKIKIRSISSKSL, and SIPKSKSHSASLSS. Positions 750 to 761 are enriched in polar residues; that stretch reads QLRPATNGSTTA. Residues 789 to 807 are compositionally biased toward pro residues; it reads APPPPPSAPPAPPVPPAPP. Polar residues predominate over residues 811–826; it reads LSEQTSEIPQQRTAPS. Positions 867-876 are enriched in basic and acidic residues; that stretch reads LREKNERQNR. Over residues 877-892 the composition is skewed to polar residues; the sequence is QQETGQNNADTASGGS. The region spanning 953 to 1205 is the Protein kinase domain; sequence YVDLVKIGQG…ADELLHDNFI (253 aa). Residues 959 to 967 and Lys-983 each bind ATP; that span reads IGQGASGGV. The active-site Proton acceptor is the Asp-1073.

This sequence belongs to the protein kinase superfamily. STE Ser/Thr protein kinase family. STE20 subfamily.

The protein resides in the cytoplasm. It localises to the nucleus. It catalyses the reaction L-seryl-[protein] + ATP = O-phospho-L-seryl-[protein] + ADP + H(+). The catalysed reaction is L-threonyl-[protein] + ATP = O-phospho-L-threonyl-[protein] + ADP + H(+). Functionally, MAP4K component of the MAPK pathway required for the mating pheromone response, and the regulation of cell polarity and cell cycle. Phosphorylates histone H2B to form H2BS10ph. Required for hyphal formation and virulence. This Candida albicans (Yeast) protein is Serine/threonine-protein kinase CST20 (CST20).